The following is a 247-amino-acid chain: tRNA pseudouridine synthase A (247 aa).

Catalysis depends on aspartate 52, which acts as the Nucleophile. Residue tyrosine 110 participates in substrate binding.

It belongs to the tRNA pseudouridine synthase TruA family. In terms of assembly, homodimer.

The enzyme catalyses uridine(38/39/40) in tRNA = pseudouridine(38/39/40) in tRNA. Its function is as follows. Formation of pseudouridine at positions 38, 39 and 40 in the anticodon stem and loop of transfer RNAs. This Geobacter sp. (strain M21) protein is tRNA pseudouridine synthase A.